The sequence spans 356 residues: Viral cathepsin (356 aa).

Residues 1–40 (MYANALVCLNPSFIKLQFHIVCTMNIIGIVTLALCSAASA) form the signal peptide. A propeptide spans 41–144 (ADEGAAYNLQ…IILNQPPDKG (104 aa)) (activation peptide). Cystine bridges form between C165/C206, C199/C239, and C295/C343. The active site involves C168. Active-site residues include H302 and N322.

It belongs to the peptidase C1 family. Synthesized as an inactive proenzyme and activated by proteolytic removal of the inhibitory propeptide.

The enzyme catalyses Endopeptidase of broad specificity, hydrolyzing substrates of both cathepsin L and cathepsin B.. Its function is as follows. Cysteine protease that plays an essential role in host liquefaction to facilitate horizontal transmission of the virus. May participate in the degradation of foreign protein expressed by the baculovirus system. This Lepidoptera (butterflies and moths) protein is Viral cathepsin (VCATH).